A 199-amino-acid chain; its full sequence is 7-methyl-GTP pyrophosphatase (199 aa).

The active-site Proton acceptor is the Asp72.

Belongs to the Maf family. YceF subfamily. Requires a divalent metal cation as cofactor.

It localises to the cytoplasm. It catalyses the reaction N(7)-methyl-GTP + H2O = N(7)-methyl-GMP + diphosphate + H(+). Nucleoside triphosphate pyrophosphatase that hydrolyzes 7-methyl-GTP (m(7)GTP). May have a dual role in cell division arrest and in preventing the incorporation of modified nucleotides into cellular nucleic acids. This is 7-methyl-GTP pyrophosphatase from Alkalilimnicola ehrlichii (strain ATCC BAA-1101 / DSM 17681 / MLHE-1).